A 388-amino-acid polypeptide reads, in one-letter code: Norsolorinic acid reductase (388 aa).

Residue Y74 is the Proton donor of the active site. NADP(+) is bound at residue 233 to 243 (GVLGRGQFRSA).

The protein belongs to the aldo/keto reductase family. Aldo/keto reductase 2 subfamily.

The protein operates within mycotoxin biosynthesis; aflatoxin biosynthesis. This Aspergillus flavus (strain ATCC 200026 / FGSC A1120 / IAM 13836 / NRRL 3357 / JCM 12722 / SRRC 167) protein is Norsolorinic acid reductase (norA).